The primary structure comprises 248 residues: Probable transcriptional regulatory protein PLES_43501 (248 aa).

Belongs to the TACO1 family.

It is found in the cytoplasm. The sequence is that of Probable transcriptional regulatory protein PLES_43501 from Pseudomonas aeruginosa (strain LESB58).